Here is a 540-residue protein sequence, read N- to C-terminus: Cystathionine gamma-synthase 1, chloroplastic (540 aa).

Residues 1-78 constitute a chloroplast transit peptide; sequence MAVSSCARAF…RNCSNIGVAQ (78 aa). Residues Tyr-203, Arg-205, Gly-233, Met-234, Tyr-258, Ser-353, and Thr-355 each coordinate pyridoxal 5'-phosphate. An N6-(pyridoxal phosphate)lysine modification is found at Lys-356.

The protein belongs to the trans-sulfuration enzymes family. In terms of assembly, forms homotetramers composed of 2 homodimers. It depends on pyridoxal 5'-phosphate as a cofactor.

It localises to the plastid. The protein localises to the chloroplast. The catalysed reaction is O-phospho-L-homoserine + L-cysteine = L,L-cystathionine + phosphate. The enzyme catalyses O-succinyl-L-homoserine + L-cysteine = L,L-cystathionine + succinate + H(+). It functions in the pathway amino-acid biosynthesis; L-methionine biosynthesis via de novo pathway; L-cystathionine from O-succinyl-L-homoserine: step 1/1. With respect to regulation, irreversibly inactivated by DL-propargylglycine. Its function is as follows. Catalyzes the first committed step of methionine (Met) biosynthesis. Catalyzes the formation of L-cystathionine from homoserine esters and L-cysteine, via a gamma-replacement reaction. This Nicotiana tabacum (Common tobacco) protein is Cystathionine gamma-synthase 1, chloroplastic.